A 196-amino-acid chain; its full sequence is Ribonuclease S-F11 (196 aa).

Cys16 and Cys21 are oxidised to a cystine. A glycan (N-linked (GlcNAc...) asparagine) is linked at Asn28. Residue His32 is the Proton donor of the active site. Residues His32 and Gln69–Leu70 contribute to the RNA site. Disulfide bonds link Cys46–Cys94, Cys153–Cys186, and Cys169–Cys180. Residue Gln87 is part of the active site. Lys90–His91 serves as a coordination point for RNA. Catalysis depends on His91, which acts as the Proton acceptor.

The protein belongs to the RNase T2 family. As to quaternary structure, monomer.

It localises to the secreted. It is found in the extracellular space. It catalyses the reaction a ribonucleotidyl-ribonucleotide-RNA + H2O = a 3'-end 3'-phospho-ribonucleotide-RNA + a 5'-end dephospho-ribonucleoside-RNA + H(+). Functionally, self-incompatibility (SI) is the inherited ability of a flowering plant to prevent self-fertilization by discriminating between self and non-self pollen during pollination. In many species of the Solanaceae, self-incompatibility is controlled by the single, multiallelic locus S. This is Ribonuclease S-F11 from Nicotiana alata (Winged tobacco).